We begin with the raw amino-acid sequence, 546 residues long: Chaperonin GroEL 3 (546 aa).

Residues 30 to 33 (TLGP), Lys-51, 87 to 91 (DGTTT), Gly-415, and Asp-496 each bind ATP.

Belongs to the chaperonin (HSP60) family. In terms of assembly, forms a cylinder of 14 subunits composed of two heptameric rings stacked back-to-back. Interacts with the co-chaperonin GroES.

It is found in the cytoplasm. It carries out the reaction ATP + H2O + a folded polypeptide = ADP + phosphate + an unfolded polypeptide.. Its function is as follows. Together with its co-chaperonin GroES, plays an essential role in assisting protein folding. The GroEL-GroES system forms a nano-cage that allows encapsulation of the non-native substrate proteins and provides a physical environment optimized to promote and accelerate protein folding. The protein is Chaperonin GroEL 3 of Bradyrhizobium diazoefficiens (strain JCM 10833 / BCRC 13528 / IAM 13628 / NBRC 14792 / USDA 110).